The chain runs to 546 residues: CTP synthase (546 aa).

Residues 1 to 266 (MTTNYIFVTG…DELVCKRFGI (266 aa)) are amidoligase domain. Ser-14 contacts CTP. Position 14 (Ser-14) interacts with UTP. ATP contacts are provided by residues 15 to 20 (SLGKGI) and Asp-72. Positions 72 and 140 each coordinate Mg(2+). Residues 147 to 149 (DIE), 187 to 192 (KTKPTQ), and Lys-223 each bind CTP. UTP contacts are provided by residues 187–192 (KTKPTQ) and Lys-223. ATP is bound at residue 239–241 (RDV). Residues 291–542 (TIGMVGKYIE…VKAAGEFQRG (252 aa)) enclose the Glutamine amidotransferase type-1 domain. Gly-352 lines the L-glutamine pocket. Cys-379 functions as the Nucleophile; for glutamine hydrolysis in the catalytic mechanism. Residues 380 to 383 (LGMQ), Glu-403, and Arg-470 each bind L-glutamine. Catalysis depends on residues His-515 and Glu-517.

This sequence belongs to the CTP synthase family. Homotetramer.

It carries out the reaction UTP + L-glutamine + ATP + H2O = CTP + L-glutamate + ADP + phosphate + 2 H(+). The enzyme catalyses L-glutamine + H2O = L-glutamate + NH4(+). It catalyses the reaction UTP + NH4(+) + ATP = CTP + ADP + phosphate + 2 H(+). The protein operates within pyrimidine metabolism; CTP biosynthesis via de novo pathway; CTP from UDP: step 2/2. Allosterically activated by GTP, when glutamine is the substrate; GTP has no effect on the reaction when ammonia is the substrate. The allosteric effector GTP functions by stabilizing the protein conformation that binds the tetrahedral intermediate(s) formed during glutamine hydrolysis. Inhibited by the product CTP, via allosteric rather than competitive inhibition. Catalyzes the ATP-dependent amination of UTP to CTP with either L-glutamine or ammonia as the source of nitrogen. Regulates intracellular CTP levels through interactions with the four ribonucleotide triphosphates. The chain is CTP synthase from Vibrio atlanticus (strain LGP32) (Vibrio splendidus (strain Mel32)).